The chain runs to 718 residues: Probable glycerol-3-phosphate acyltransferase, mitochondrial (718 aa).

Residues 167–172 (HRSHLD) carry the HXXXXD motif motif. The helical transmembrane segment at 409–425 (MMCSISPVAVVSCLLLA) threads the bilayer.

This sequence belongs to the GPAT/DAPAT family.

The protein resides in the mitochondrion membrane. The enzyme catalyses sn-glycerol 3-phosphate + an acyl-CoA = a 1-acyl-sn-glycero-3-phosphate + CoA. It functions in the pathway phospholipid metabolism; CDP-diacylglycerol biosynthesis; CDP-diacylglycerol from sn-glycerol 3-phosphate: step 1/3. In Caenorhabditis elegans, this protein is Probable glycerol-3-phosphate acyltransferase, mitochondrial (acl-6).